Here is a 264-residue protein sequence, read N- to C-terminus: Thymidylate synthase (264 aa).

R21 provides a ligand contact to dUMP. Residue H51 coordinates (6R)-5,10-methylene-5,6,7,8-tetrahydrofolate. 126-127 (RR) lines the dUMP pocket. C146 functions as the Nucleophile in the catalytic mechanism. Residues 166–169 (RSAD), N177, and 207–209 (HLY) each bind dUMP. Residue D169 coordinates (6R)-5,10-methylene-5,6,7,8-tetrahydrofolate. S263 serves as a coordination point for (6R)-5,10-methylene-5,6,7,8-tetrahydrofolate.

The protein belongs to the thymidylate synthase family. Bacterial-type ThyA subfamily. Homodimer.

The protein localises to the cytoplasm. The catalysed reaction is dUMP + (6R)-5,10-methylene-5,6,7,8-tetrahydrofolate = 7,8-dihydrofolate + dTMP. Its pathway is pyrimidine metabolism; dTTP biosynthesis. Its function is as follows. Catalyzes the reductive methylation of 2'-deoxyuridine-5'-monophosphate (dUMP) to 2'-deoxythymidine-5'-monophosphate (dTMP) while utilizing 5,10-methylenetetrahydrofolate (mTHF) as the methyl donor and reductant in the reaction, yielding dihydrofolate (DHF) as a by-product. This enzymatic reaction provides an intracellular de novo source of dTMP, an essential precursor for DNA biosynthesis. This chain is Thymidylate synthase, found in Laribacter hongkongensis (strain HLHK9).